A 226-amino-acid chain; its full sequence is tRNA (guanine-N(7)-)-methyltransferase (226 aa).

S-adenosyl-L-methionine is bound by residues Asp59, Glu84, and Asp111. Asp169 contributes to the substrate binding site.

Belongs to the class I-like SAM-binding methyltransferase superfamily. TrmB family.

The enzyme catalyses guanosine(46) in tRNA + S-adenosyl-L-methionine = N(7)-methylguanosine(46) in tRNA + S-adenosyl-L-homocysteine. Its pathway is tRNA modification; N(7)-methylguanine-tRNA biosynthesis. Functionally, catalyzes the formation of N(7)-methylguanine at position 46 (m7G46) in tRNA. This Chloroherpeton thalassium (strain ATCC 35110 / GB-78) protein is tRNA (guanine-N(7)-)-methyltransferase.